The primary structure comprises 311 residues: tRNA dimethylallyltransferase (311 aa).

11 to 18 (GPTASGKS) serves as a coordination point for ATP. 13–18 (TASGKS) serves as a coordination point for substrate. 2 interaction with substrate tRNA regions span residues 36–39 (DSMQ) and 160–164 (QRLIR).

Belongs to the IPP transferase family. Monomer. Mg(2+) serves as cofactor.

The catalysed reaction is adenosine(37) in tRNA + dimethylallyl diphosphate = N(6)-dimethylallyladenosine(37) in tRNA + diphosphate. Functionally, catalyzes the transfer of a dimethylallyl group onto the adenine at position 37 in tRNAs that read codons beginning with uridine, leading to the formation of N6-(dimethylallyl)adenosine (i(6)A). The protein is tRNA dimethylallyltransferase of Rickettsia prowazekii (strain Madrid E).